A 648-amino-acid chain; its full sequence is Probable LRR receptor-like serine/threonine-protein kinase At4g30520 (648 aa).

The first 30 residues, 1 to 30, serve as a signal peptide directing secretion; it reads MVVVTKKTMKIQIHLLYSFLFLCFSTLTLS. Over 31–238 the chain is Extracellular; sequence SEPRNPEVEA…SSSGRRSNRL (208 aa). N-linked (GlcNAc...) asparagine glycosylation is found at Asn99 and Asn112. LRR repeat units lie at residues 100–125, 127–148, 149–172, and 174–199; these read LTNL…GFLP, LQTL…IDQL, SSLQ…LSQI, and HLSF…TFNV. Asn158 and Asn184 each carry an N-linked (GlcNAc...) asparagine glycan. Residues 239 to 259 traverse the membrane as a helical segment; sequence AIALSVSLGSVVILVLALGSF. The Cytoplasmic portion of the chain corresponds to 260-648; sequence CWYRKKQRRL…SFAMELSGPR (389 aa). Position 300 is a phosphothreonine (Thr300). Residues 303-582 enclose the Protein kinase domain; that stretch reads FSSKNILGAG…EGDGLAERWA (280 aa). 309-317 contacts ATP; it reads LGAGGFGNV. Thr326 bears the Phosphothreonine mark. Lys331 contributes to the ATP binding site. Phosphoserine is present on residues Ser384 and Ser387. Asp426 serves as the catalytic Proton acceptor. Thr459, Thr460, and Thr465 each carry phosphothreonine. A Phosphotyrosine modification is found at Tyr473. At Ser475 the chain carries Phosphoserine. Thr476 is subject to Phosphothreonine. Ser480 carries the phosphoserine modification. At Thr555 the chain carries Phosphothreonine.

The protein belongs to the protein kinase superfamily. Ser/Thr protein kinase family.

It localises to the cell membrane. It catalyses the reaction L-seryl-[protein] + ATP = O-phospho-L-seryl-[protein] + ADP + H(+). It carries out the reaction L-threonyl-[protein] + ATP = O-phospho-L-threonyl-[protein] + ADP + H(+). In Arabidopsis thaliana (Mouse-ear cress), this protein is Probable LRR receptor-like serine/threonine-protein kinase At4g30520.